Here is a 400-residue protein sequence, read N- to C-terminus: Methylthioribose kinase (400 aa).

Residues Asn40, Lys57, and Glu111 to Leu113 contribute to the ATP site. Residue Asp229 coordinates substrate. Residue Asp246 to Glu248 participates in ATP binding. Residue Arg344 participates in substrate binding.

This sequence belongs to the methylthioribose kinase family. In terms of assembly, homodimer.

The catalysed reaction is 5-(methylsulfanyl)-D-ribose + ATP = 5-(methylsulfanyl)-alpha-D-ribose 1-phosphate + ADP + H(+). It functions in the pathway amino-acid biosynthesis; L-methionine biosynthesis via salvage pathway; S-methyl-5-thio-alpha-D-ribose 1-phosphate from S-methyl-5'-thioadenosine (hydrolase route): step 2/2. Functionally, catalyzes the phosphorylation of methylthioribose into methylthioribose-1-phosphate. In Pectobacterium carotovorum subsp. carotovorum (strain PC1), this protein is Methylthioribose kinase.